We begin with the raw amino-acid sequence, 591 residues long: Probable auxin efflux carrier component 3b (591 aa).

Over Met-1–Glu-6 the chain is Extracellular. Residues Leu-7–Ser-27 form a helical membrane-spanning segment. Over Val-28–Gln-38 the chain is Cytoplasmic. A helical membrane pass occupies residues Cys-39 to Ile-59. Val-51 provides a ligand contact to (indol-3-yl)acetate. At Ser-60–Arg-70 the chain is on the extracellular side. Residues Phe-71 to Pro-93 form a helical membrane-spanning segment. Over Ala-94–Ser-107 the chain is Cytoplasmic. The chain crosses the membrane as a helical span at residues Ile-108–Val-128. (indol-3-yl)acetate-binding residues include Asn-118 and Leu-120. Topologically, residues Ser-129–Asp-137 are extracellular. The chain crosses the membrane as a helical span at residues Leu-138 to Phe-158. Tyr-151 is a binding site for (indol-3-yl)acetate. At Glu-159 to Ser-450 the chain is on the cytoplasmic side. Polar residues-rich tracts occupy residues Ser-243–Thr-254 and Ser-283–Pro-292. Disordered regions lie at residues Ser-243–Arg-269, Ser-283–Asn-313, Glu-344–Ala-374, and Ala-392–Gly-420. The span at Lys-395–Thr-407 shows a compositional bias: low complexity. Residues Leu-451 to Val-471 traverse the membrane as a helical segment. The Extracellular segment spans residues Ala-472–Ser-474. The helical transmembrane segment at Ile-475–Ala-495 threads the bilayer. Residues Thr-496 to Ser-511 lie on the Cytoplasmic side of the membrane. A helical membrane pass occupies residues Met-512–Ile-532. At Arg-533–Thr-535 the chain is on the extracellular side. A helical membrane pass occupies residues Leu-536–Ala-556. The (indol-3-yl)acetate site is built by Ile-550 and Val-551. Residues Lys-557–Thr-568 are Cytoplasmic-facing. Residues Leu-569–Gly-589 traverse the membrane as a helical segment. Residues Leu-590–Leu-591 lie on the Extracellular side of the membrane.

The protein belongs to the auxin efflux carrier (TC 2.A.69.1) family. Homodimer. As to expression, expressed in stem bases and leaves.

It localises to the membrane. In terms of biological role, may act as a component of the auxin efflux carrier. The sequence is that of Probable auxin efflux carrier component 3b from Oryza sativa subsp. japonica (Rice).